Here is a 391-residue protein sequence, read N- to C-terminus: Formate-dependent phosphoribosylglycinamide formyltransferase (391 aa).

N(1)-(5-phospho-beta-D-ribosyl)glycinamide is bound by residues 20–21 (EL) and Glu80. ATP contacts are provided by residues Arg112, Lys153, 158–163 (SSGKGQ), 193–196 (EGFI), and Glu201. The 190-residue stretch at 117–306 (RLAAETLGLP…EFALHVRAIL (190 aa)) folds into the ATP-grasp domain. Mg(2+) is bound by residues Glu265 and Glu277. N(1)-(5-phospho-beta-D-ribosyl)glycinamide-binding positions include Asp284, Lys354, and 361 to 362 (RR).

This sequence belongs to the PurK/PurT family. Homodimer.

It carries out the reaction N(1)-(5-phospho-beta-D-ribosyl)glycinamide + formate + ATP = N(2)-formyl-N(1)-(5-phospho-beta-D-ribosyl)glycinamide + ADP + phosphate + H(+). Its pathway is purine metabolism; IMP biosynthesis via de novo pathway; N(2)-formyl-N(1)-(5-phospho-D-ribosyl)glycinamide from N(1)-(5-phospho-D-ribosyl)glycinamide (formate route): step 1/1. Its function is as follows. Involved in the de novo purine biosynthesis. Catalyzes the transfer of formate to 5-phospho-ribosyl-glycinamide (GAR), producing 5-phospho-ribosyl-N-formylglycinamide (FGAR). Formate is provided by PurU via hydrolysis of 10-formyl-tetrahydrofolate. In Shewanella oneidensis (strain ATCC 700550 / JCM 31522 / CIP 106686 / LMG 19005 / NCIMB 14063 / MR-1), this protein is Formate-dependent phosphoribosylglycinamide formyltransferase.